Reading from the N-terminus, the 412-residue chain is Poly-beta-1,6-N-acetyl-D-glucosamine synthase (412 aa).

4 consecutive transmembrane segments (helical) span residues 7–28 (LLFY…YFFI), 298–320 (IASI…TANI), 332–354 (IFFF…ALFI), and 364–386 (VGLI…VVIM).

This sequence belongs to the glycosyltransferase 2 family.

Its subcellular location is the cell membrane. Functionally, N-acetylglucosaminyltransferase that catalyzes the polymerization of single monomer units of UDP-N-acetylglucosamine to produce the linear homomer poly-beta-1,6-N-acetyl-D-glucosamine (PNAG, also referred to as PIA), a biofilm adhesin polysaccharide. Requires IcaD for full activity. This Staphylococcus epidermidis (strain ATCC 35984 / DSM 28319 / BCRC 17069 / CCUG 31568 / BM 3577 / RP62A) protein is Poly-beta-1,6-N-acetyl-D-glucosamine synthase (icaA).